Here is a 1078-residue protein sequence, read N- to C-terminus: Rho family-interacting cell polarization regulator 2 (1078 aa).

A phosphoserine mark is found at serine 46 and serine 62. The involved in cell filopodia formation stretch occupies residues 80 to 138 (MHNLGHKNNNTPKEPQPKRVEEVYRALKNGLDEYLEFHQTELDKLTAQLKDMKRNSRLG). Residues 108–137 (NGLDEYLEFHQTELDKLTAQLKDMKRNSRL) are a coiled coil. Serine 366 bears the Phosphoserine mark. Positions 488–508 (SSLSSQNEGTEDSSSASSRNS) are enriched in polar residues. The disordered stretch occupies residues 488 to 534 (SSLSSQNEGTEDSSSASSRNSLGEDHEPKSHPKSDTVEPGKPGVATR). Basic and acidic residues predominate over residues 509–525 (LGEDHEPKSHPKSDTVE). Serine 582 carries the phosphoserine modification.

It belongs to the RIPOR family. Homooligomer; homooligomerization is regulated by RHOC and leads to the formation of concatemers through the association of N- and C-termini. Interacts (phosphorylated form) with 14-3-3 proteins; these interactions occur during myogenic cell differentiation and also induces T cell proliferation arrest. Interacts (phosphorylated form) with HDAC6; this interaction occurs during early myogenic differentiation, prevents HDAC6 to deacetylate tubulin and also induces T cell proliferation arrest. Interacts with DYSF; this interaction occurs during early myogenic differentiation. Interacts with MYOF. Interacts (via active GTP- or inactive GDP-bound forms) with RHOA; this interaction is direct, blocks the loading of GTP to RHOA and decreases upon chemokine CCL19 stimulation in primary T lymphocytes. Interacts with RHOC. Interacts (via phosphorylated form) with YWHAB; this interaction occurs in a chemokine-dependent manner and does not compete for binding of RIPOR2 with RHOA nor blocks inhibition of RIPOR2-mediated RHOA activity. Interacts with YWHAE. Interacts with YWHAQ. In terms of processing, phosphorylated. Chemokine-induced phosphorylation in neutrophils occurs in a PKC- and AKT-dependent manner, resulting in RIPOR2 interaction with YWHAB and stabilization. Phosphorylated by PKCA, AKT1 and MAPKAPK1A; in vitro. Expressed in the cochlea. Expressed in inner hair cells and outer hair cells and Hensen's cells (at protein level). Expressed in the brain, cerebellum, spinal cord, retina, heart, spleen liver, kidney, bladder, muscle and lung. Expressed in the cochlea of the inner ear.

Its subcellular location is the cytoplasm. The protein resides in the cytoskeleton. It is found in the cell projection. It localises to the filopodium. The protein localises to the stereocilium. Its subcellular location is the stereocilium membrane. The protein resides in the apical cell membrane. Its function is as follows. Acts as an inhibitor of the small GTPase RHOA and plays several roles in the regulation of myoblast and hair cell differentiation, lymphocyte T proliferation and neutrophil polarization. Plays a role in fetal mononuclear myoblast differentiation by promoting filopodia and myotube formation. Maintains naive T lymphocytes in a quiescent state and prevents chemokine-induced T lymphocyte responses, such as cell adhesion, polarization and migration. Involved also in the regulation of neutrophil polarization, chemotaxis and adhesion. Required for normal development of inner and outer hair cell stereocilia within the cochlea of the inner ear. Plays a role for maintaining the structural organization of the basal domain of stereocilia. Involved in mechanosensory hair cell function. Required for normal hearing. The polypeptide is Rho family-interacting cell polarization regulator 2 (Mus musculus (Mouse)).